The sequence spans 222 residues: Endonuclease V (222 aa).

Positions 34 and 102 each coordinate Mg(2+).

It belongs to the endonuclease V family. The cofactor is Mg(2+).

The protein resides in the cytoplasm. It carries out the reaction Endonucleolytic cleavage at apurinic or apyrimidinic sites to products with a 5'-phosphate.. In terms of biological role, DNA repair enzyme involved in the repair of deaminated bases. Selectively cleaves double-stranded DNA at the second phosphodiester bond 3' to a deoxyinosine leaving behind the intact lesion on the nicked DNA. The protein is Endonuclease V of Photorhabdus laumondii subsp. laumondii (strain DSM 15139 / CIP 105565 / TT01) (Photorhabdus luminescens subsp. laumondii).